Reading from the N-terminus, the 315-residue chain is Homoserine kinase (315 aa).

ATP is bound at residue 97–107; sequence PPARGLGSSAT.

It belongs to the GHMP kinase family. Homoserine kinase subfamily.

It is found in the cytoplasm. It carries out the reaction L-homoserine + ATP = O-phospho-L-homoserine + ADP + H(+). It functions in the pathway amino-acid biosynthesis; L-threonine biosynthesis; L-threonine from L-aspartate: step 4/5. Its function is as follows. Catalyzes the ATP-dependent phosphorylation of L-homoserine to L-homoserine phosphate. In Prochlorococcus marinus (strain MIT 9301), this protein is Homoserine kinase.